A 588-amino-acid polypeptide reads, in one-letter code: MNNSINHKFHHISRAEYQELLAVSRGDAVADYIIDNVSILDLINGGEISGPIVIKGRYIAGVGAEYADAPALQRIDARGATAVPGFIDAHLHIESSMMTPVTFETATLPRGLTTVICDPHEIVNVMGEAGFAWFARCAEQARQNQYLQVSSCVPALEGCDVNGASFTLEQMLAWRDHPQVTGLAEMMDYPGVISGQNALLDKLDAFRHLTLDGHCPGLGGKELNAYIAAGIENCHESYQLEEGRRKLQLGMSLMIREGSAARNLNALAPLINEFNSPQCMLCTDDRNPWEIAHEGHIDALIRRLIEQHNVPLHVAYRVASWSTARHFGLNHLGLLAPGKQADIVLLSDARKVTVQQVLVKGEPIDAQTLQAKESARLAQSAPPYGNTISRQPVSASDFALQFTPGKRYRVIDVIHNELITHSRSSVYSENGFDRDDVCFIAVLERYGQRLAPACGLLGGFGLNEGALAATVSHDSHNIVVIGRSAEEMALAVNQVIQDGGGLCVVRNGQVQSHLPLPIAGLMSTDTAQSLAEQIDALKAAARECGPLPDEPFIQMAFLSLPVIPALKLTSQGLFDGEKFAFTTLEVTE.

It belongs to the metallo-dependent hydrolases superfamily. Adenine deaminase family. As to quaternary structure, homodimer. The cofactor is Mn(2+).

The enzyme catalyses adenine + H2O + H(+) = hypoxanthine + NH4(+). This chain is Adenine deaminase, found in Escherichia coli O7:K1 (strain IAI39 / ExPEC).